A 476-amino-acid polypeptide reads, in one-letter code: Arginine biosynthesis bifunctional protein ArgJ, mitochondrial (476 aa).

6 residues coordinate substrate: Thr-204, Lys-233, Thr-244, Glu-331, Asn-471, and Thr-476. Thr-244 functions as the Nucleophile in the catalytic mechanism.

Belongs to the ArgJ family. As to quaternary structure, heterodimer of an alpha and a beta chain. In terms of processing, the alpha and beta chains are autoproteolytically processed from a single precursor protein within the mitochondrion.

The protein resides in the mitochondrion matrix. It catalyses the reaction N(2)-acetyl-L-ornithine + L-glutamate = N-acetyl-L-glutamate + L-ornithine. The catalysed reaction is L-glutamate + acetyl-CoA = N-acetyl-L-glutamate + CoA + H(+). It functions in the pathway amino-acid biosynthesis; L-arginine biosynthesis; L-ornithine and N-acetyl-L-glutamate from L-glutamate and N(2)-acetyl-L-ornithine (cyclic): step 1/1. The protein operates within amino-acid biosynthesis; L-arginine biosynthesis; N(2)-acetyl-L-ornithine from L-glutamate: step 1/4. Its function is as follows. Catalyzes two activities which are involved in the cyclic version of arginine biosynthesis: the synthesis of acetylglutamate from glutamate and acetyl-CoA, and of ornithine by transacetylation between acetylornithine and glutamate. The sequence is that of Arginine biosynthesis bifunctional protein ArgJ, mitochondrial from Arthroderma otae (strain ATCC MYA-4605 / CBS 113480) (Microsporum canis).